Reading from the N-terminus, the 993-residue chain is Chromosome transmission fidelity protein 18 homolog (993 aa).

A disordered region spans residues 26 to 72 (PDEFNAYDGPSTSKQAAEKQKENRAPVAALRDSTRLGNSTLGSPQLS). Polar residues predominate over residues 60–72 (RLGNSTLGSPQLS). 427–434 (GPPGLGKT) is a binding site for ATP. Positions 892–913 (AAPKGGAPSAPAAKKKTSGAAA) are disordered. A compositionally biased stretch (low complexity) spans 894 to 913 (PKGGAPSAPAAKKKTSGAAA).

This sequence belongs to the activator 1 small subunits family. CTF18 subfamily. Component of the CTF18-RFC complex.

It localises to the nucleus. Functionally, chromosome cohesion factor involved in sister chromatid cohesion and fidelity of chromosome transmission. Component of one of the cell nuclear antigen loader complexes, CTF18-replication factor C (CTF18-RFC). The CTF18-RFC complex catalyzes the ATP-dependent loading of PCNA onto primed and gapped DNA and has weak ATPase activity. The CTF18-RFC complex catalyzes the ATP-dependent loading of PCNA onto primed and gapped DNA. The protein is Chromosome transmission fidelity protein 18 homolog of Drosophila melanogaster (Fruit fly).